A 214-amino-acid polypeptide reads, in one-letter code: Probable transaldolase (214 aa).

Lysine 83 (schiff-base intermediate with substrate) is an active-site residue.

This sequence belongs to the transaldolase family. Type 3B subfamily.

The protein resides in the cytoplasm. The enzyme catalyses D-sedoheptulose 7-phosphate + D-glyceraldehyde 3-phosphate = D-erythrose 4-phosphate + beta-D-fructose 6-phosphate. It participates in carbohydrate degradation; pentose phosphate pathway; D-glyceraldehyde 3-phosphate and beta-D-fructose 6-phosphate from D-ribose 5-phosphate and D-xylulose 5-phosphate (non-oxidative stage): step 2/3. In terms of biological role, transaldolase is important for the balance of metabolites in the pentose-phosphate pathway. This Brevibacillus brevis (strain 47 / JCM 6285 / NBRC 100599) protein is Probable transaldolase.